We begin with the raw amino-acid sequence, 238 residues long: Endonuclease III homolog (238 aa).

The 27-residue stretch at 129–155 (REKGLPREMKDLISLPGIGNKMALLYM) folds into the HhH domain. Residue Lys-149 is the Nucleophile; for N-glycosylase activity of the active site. Residues Cys-217, Cys-224, Cys-227, and Cys-233 each coordinate [4Fe-4S] cluster.

The protein belongs to the Nth/MutY family. Requires [4Fe-4S] cluster as cofactor.

It is found in the nucleus. Its subcellular location is the mitochondrion. It catalyses the reaction 2'-deoxyribonucleotide-(2'-deoxyribose 5'-phosphate)-2'-deoxyribonucleotide-DNA = a 3'-end 2'-deoxyribonucleotide-(2,3-dehydro-2,3-deoxyribose 5'-phosphate)-DNA + a 5'-end 5'-phospho-2'-deoxyribonucleoside-DNA + H(+). Its function is as follows. Bifunctional DNA N-glycosylase with associated apurinic/apyrimidinic (AP) lyase function that catalyzes the first step in base excision repair (BER), the primary repair pathway for the repair of oxidative DNA damage. The DNA N-glycosylase activity releases the damaged DNA base from DNA by cleaving the N-glycosidic bond, leaving an AP site. The AP lyase activity cleaves the phosphodiester bond 3' to the AP site by a beta-elimination. Primarily recognizes and repairs oxidative base damage of pyrimidines. This chain is Endonuclease III homolog, found in Encephalitozoon cuniculi (strain GB-M1) (Microsporidian parasite).